The sequence spans 326 residues: Lipoyl synthase (326 aa).

The [4Fe-4S] cluster site is built by cysteine 68, cysteine 73, cysteine 79, cysteine 94, cysteine 98, cysteine 101, and serine 308. The Radical SAM core domain maps to 80-297 (FNHGTATFMI…KDVAMGLGFS (218 aa)).

This sequence belongs to the radical SAM superfamily. Lipoyl synthase family. It depends on [4Fe-4S] cluster as a cofactor.

It localises to the cytoplasm. The enzyme catalyses [[Fe-S] cluster scaffold protein carrying a second [4Fe-4S](2+) cluster] + N(6)-octanoyl-L-lysyl-[protein] + 2 oxidized [2Fe-2S]-[ferredoxin] + 2 S-adenosyl-L-methionine + 4 H(+) = [[Fe-S] cluster scaffold protein] + N(6)-[(R)-dihydrolipoyl]-L-lysyl-[protein] + 4 Fe(3+) + 2 hydrogen sulfide + 2 5'-deoxyadenosine + 2 L-methionine + 2 reduced [2Fe-2S]-[ferredoxin]. The protein operates within protein modification; protein lipoylation via endogenous pathway; protein N(6)-(lipoyl)lysine from octanoyl-[acyl-carrier-protein]: step 2/2. Its function is as follows. Catalyzes the radical-mediated insertion of two sulfur atoms into the C-6 and C-8 positions of the octanoyl moiety bound to the lipoyl domains of lipoate-dependent enzymes, thereby converting the octanoylated domains into lipoylated derivatives. This chain is Lipoyl synthase, found in Aeromonas salmonicida (strain A449).